The sequence spans 637 residues: MRDAIIADPLLAIDHETVAEKKKQSKNLKISLLLLLILLATSGYYSFSDNITTVFLSRQAIDDDHSLSLGTISDVVESENGVVAADDARCSEIGASVLRSGGHAVDAAVAITLCVGVVNPMSSGIGGGSFLIVSSQKDSKAEAFDMRETAPLAASKDMYKNDASAKSLGALSMGVPGEIAGLYEAWKRYGRLPWKPLFEPAIKLARDGFVVYPYLGKAISTKVAMILKDPGMRSVFSRNGQVLKTGETCYNPELAQSLETISEQGPGAFYNGTVGEKLVKDVKKAGGIITMDDLRSYKVRVTDAMSVDVMGYTVHGMPPPSGGTVGFSMVMNILDSYSNLYTASGRELGLHRLIEAMKHMFAARMDLGDPEFVNVTNSMNQMLSKAHAEEIQKRIFDNTTFPPEYYMNRWSQLRDQGTSHFCVVDADRNSVSMTSTVNYRFGAGVLSPSTGIVLNNEMDDFSTPTEITPDMLPPAPTNFIEPNKRPLSSMTPLVITKDGEFVAALGGAGGMHIIPAVLQVFLNCFVLNMKPKEAVESARIYHRLIPNVVSYENFTTINGDHIGVSEDTKMFLAERGHELKELSGGAIVQLIVQSFKEEKEEEMIIEIGRKIGKKSKPLKGLLTAVSDPRKDGKPAAV.

A helical transmembrane segment spans residues 28-48; sequence LKISLLLLLILLATSGYYSFS. The N-linked (GlcNAc...) asparagine glycan is linked to asparagine 50. Position 147 (arginine 147) interacts with L-glutamate. Asparagine 271, asparagine 374, and asparagine 398 each carry an N-linked (GlcNAc...) asparagine glycan. Threonine 418 (nucleophile) is an active-site residue. L-glutamate is bound by residues threonine 436, asparagine 438, glutamate 457, aspartate 460, 488-489, and 509-510; these read SS and GG. N-linked (GlcNAc...) asparagine glycosylation occurs at asparagine 553.

Belongs to the gamma-glutamyltransferase family. Expressed in roots, cotyledons, leaves, flowers and siliques.

It localises to the vacuole membrane. The enzyme catalyses an N-terminal (5-L-glutamyl)-[peptide] + an alpha-amino acid = 5-L-glutamyl amino acid + an N-terminal L-alpha-aminoacyl-[peptide]. It catalyses the reaction glutathione + H2O = L-cysteinylglycine + L-glutamate. The catalysed reaction is an S-substituted glutathione + H2O = an S-substituted L-cysteinylglycine + L-glutamate. It participates in sulfur metabolism; glutathione metabolism. May play a role in protecting plants from some xenobiotic chemicals by degrading vacuolar glutathione conjugates into cysteine conjugates. The protein is Glutathione hydrolase 3 (GGT3) of Arabidopsis thaliana (Mouse-ear cress).